The chain runs to 425 residues: uncharacterized protein (425 aa).

Residues 135 to 202 (KEQEILGCSH…AAQYCKYCKN (68 aa)) form a CHY-type zinc finger. Zn(2+)-binding residues include Cys-142, His-144, Cys-153, Cys-156, Cys-162, Cys-165, His-166, His-172, Cys-184, Cys-187, Cys-197, Cys-200, Cys-209, Cys-212, His-225, Cys-226, Cys-229, Cys-232, His-244, Cys-245, Cys-248, Cys-251, His-260, and Cys-262. The segment at 204 to 270 (MGRYYCNKCK…RCIERSTDCN (67 aa)) adopts a CTCHY-type zinc-finger fold. Residues 271-313 (CPICGEYMFNSRERVIFLSCSHPLHQRCHEEYIRTNYRCPTCY) form an RING-type; atypical zinc finger.

This is an uncharacterized protein from Schizosaccharomyces pombe (strain 972 / ATCC 24843) (Fission yeast).